Reading from the N-terminus, the 500-residue chain is Serine/threonine protein phosphatase 2A 57 kDa regulatory subunit B' kappa isoform (500 aa).

Residues 1–53 are disordered; it reads MFKQFLSKLPRKSSKSDSGELNRSSSGPVSSPVQRSGTSGGGSGPVRSNSGKR. The segment covering 21-37 has biased composition (polar residues); the sequence is LNRSSSGPVSSPVQRSG.

This sequence belongs to the phosphatase 2A regulatory subunit B56 family. PP2A consists of a common heteromeric enzyme, composed of a catalytic subunit (subunits C), a constant regulatory subunit (subunit A), and a variety of regulatory subunits such as subunits B (the R2/B/PR55/B55, R3/B''/PR72/PR130/PR59 and R5/B'/B56 families).

It is found in the cytoplasm. Functionally, the B regulatory subunit may modulate substrate selectivity and catalytic activity, and may also direct the localization of the catalytic enzyme to a particular subcellular compartment. The protein is Serine/threonine protein phosphatase 2A 57 kDa regulatory subunit B' kappa isoform (B'KAPPA) of Arabidopsis thaliana (Mouse-ear cress).